Consider the following 380-residue polypeptide: Proline iminopeptidase (380 aa).

Positions 98 to 360 constitute an AB hydrolase-1 domain; the sequence is PVVFLHGGPG…IVYDAGHSAN (263 aa). S172 acts as the Nucleophile in catalysis. D329 is a catalytic residue. H357 acts as the Proton donor in catalysis.

The protein belongs to the peptidase S33 family.

It localises to the cytoplasm. It carries out the reaction Release of N-terminal proline from a peptide.. Specifically catalyzes the removal of N-terminal proline residues from peptides. The polypeptide is Proline iminopeptidase (PIP) (Arabidopsis thaliana (Mouse-ear cress)).